Consider the following 807-residue polypeptide: Glycerol-3-phosphate acyltransferase (807 aa).

The HXXXXD motif motif lies at 308-313 (CHRSHM).

The protein belongs to the GPAT/DAPAT family.

The protein localises to the cell inner membrane. It carries out the reaction sn-glycerol 3-phosphate + an acyl-CoA = a 1-acyl-sn-glycero-3-phosphate + CoA. The protein operates within phospholipid metabolism; CDP-diacylglycerol biosynthesis; CDP-diacylglycerol from sn-glycerol 3-phosphate: step 1/3. The chain is Glycerol-3-phosphate acyltransferase from Shewanella halifaxensis (strain HAW-EB4).